A 528-amino-acid chain; its full sequence is Low affinity inorganic phosphate transporter 4 (528 aa).

Over 1–18 (MGLEVLEALDSARTQWYH) the chain is Cytoplasmic. A helical transmembrane segment spans residues 19 to 39 (VTAIVIAGMGFFTDAYDLFCI). Over 40 to 68 (STVSKLLGRLYYFDPSTNKPGKLPPSVNN) the chain is Extracellular. Residues 69–89 (VVTGVALVGTLSGQLVFGWLG) traverse the membrane as a helical segment. The Cytoplasmic portion of the chain corresponds to 90 to 96 (DKLGRKK). Residues 97-117 (VYGVTLIIMVACAICSGLSFG) form a helical membrane-spanning segment. Residues 118–122 (SSAKS) are Extracellular-facing. A helical membrane pass occupies residues 123-143 (VMITLCFFRFWLGFGIGGDYP). Residues 144-158 (LSATIMSEYANKRTR) lie on the Cytoplasmic side of the membrane. A helical membrane pass occupies residues 159 to 179 (GAFIAAVFAMQGVGIIFAGLV). Residues 180–208 (SMVFSGIFKAYYQAPRFNEDPILSTQPEG) are Extracellular-facing. Residues 209 to 229 (DLLWRLILMIGAVPAAMTYYW) traverse the membrane as a helical segment. The Cytoplasmic segment spans residues 230–292 (RMKMPETGRY…SEFFNRHGRH (63 aa)). A helical membrane pass occupies residues 293–313 (LIGTMSCWFLLDIAFYSQNLT). The Extracellular segment spans residues 314-341 (QKDIYPAMGLIRQDKEMNAIDEVFQTSR). Residues 342–362 (AMFVVALFGTFPGYWFTVFFI) form a helical membrane-spanning segment. Residues 363–371 (EKLGRFKIQ) are Cytoplasmic-facing. The chain crosses the membrane as a helical span at residues 372–392 (LVGFFMMSFFMFVIGVKYEYL). The Extracellular portion of the chain corresponds to 393–401 (KDENKNLFA). A helical transmembrane segment spans residues 402-422 (LLYGLTFFFANFGPNSTTFVL). At 423-433 (PAELFPTRVRS) the chain is on the cytoplasmic side. Residues 434-454 (TCHAFSAASGKAGAMVGAFGI) form a helical membrane-spanning segment. Residues 455–468 (QYYTLDGTPRKIRR) lie on the Extracellular side of the membrane. Residues 469–489 (AMMILAFTNLIGFFCTFLVTE) form a helical membrane-spanning segment. Topologically, residues 490–528 (TKGRSLEEISGEDGRESELTATPNDRAPGIRQDSRTEKM) are cytoplasmic. Residues 497-507 (EISGEDGRESE) show a composition bias toward basic and acidic residues. The interval 497–528 (EISGEDGRESELTATPNDRAPGIRQDSRTEKM) is disordered.

The protein belongs to the major facilitator superfamily. Phosphate:H(+) symporter (TC 2.A.1.9) family. As to expression, mostly expressed in mycorrhizal roots. Also observed in root tips of non-mycorrhizal roots, in a phosphate (Pi) depended-manner, highest expression levels being observed in low Pi conditions.

Its subcellular location is the cell membrane. The catalysed reaction is phosphate(in) + H(+)(in) = phosphate(out) + H(+)(out). Low-affinity transporter for external inorganic phosphate (Pi) probably involved in the acquisition of phosphate released by arbuscular mycorrhizal (AM) fungi (e.g. Gigaspora gigantea, Glomus versiforme and G.intraradices) during AM symbiosis; required for propper mycorrhizal arbuscule morphology. Acts as a Pi-sensing machinery at the root tip level, independently of AM fungi, involved in the regulation of early root branching and lateral roots formation. The protein is Low affinity inorganic phosphate transporter 4 of Medicago truncatula (Barrel medic).